The primary structure comprises 275 residues: Large ribosomal subunit protein uL2c (275 aa).

Disordered stretches follow at residues 36–56 (KNHR…HRGK) and 224–275 (VMNP…RKRK). A compositionally biased stretch (basic residues) spans 255-275 (LGRKTRKKPKYSNRYILRKRK).

This sequence belongs to the universal ribosomal protein uL2 family. As to quaternary structure, part of the 50S ribosomal subunit.

The protein resides in the plastid. It is found in the chloroplast. This Gracilaria tenuistipitata var. liui (Red alga) protein is Large ribosomal subunit protein uL2c (rpl2).